We begin with the raw amino-acid sequence, 65 residues long: Large ribosomal subunit protein bL35 (65 aa).

Positions 1–16 (MPKQKTHRASAKRFKR) are enriched in basic residues. The interval 1–20 (MPKQKTHRASAKRFKRTGSG) is disordered.

This sequence belongs to the bacterial ribosomal protein bL35 family.

The sequence is that of Large ribosomal subunit protein bL35 from Streptococcus pyogenes serotype M1.